The following is a 79-amino-acid chain: MKLAKTAVLDPATYTSFSPGLSTCSSSQPPGDRRKGLLGCVGSGHCPLPTPAQFPKVQRPPTLLGGKNTSTQTTLHPVI.

The interval 51 to 79 is disordered; the sequence is PAQFPKVQRPPTLLGGKNTSTQTTLHPVI. The segment covering 67–79 has biased composition (polar residues); the sequence is KNTSTQTTLHPVI.

This is an uncharacterized protein from Homo sapiens (Human).